The primary structure comprises 64 residues: Large ribosomal subunit protein bL35 (64 aa).

The segment at Met1 to Ser25 is disordered.

It belongs to the bacterial ribosomal protein bL35 family.

The chain is Large ribosomal subunit protein bL35 from Koribacter versatilis (strain Ellin345).